We begin with the raw amino-acid sequence, 322 residues long: Carnosine N-methyltransferase 2 (322 aa).

Glutamate 58 provides a ligand contact to substrate. S-adenosyl-L-methionine contacts are provided by glycine 90, glutamate 119, serine 150, and isoleucine 172. Asparagine 313 contributes to the substrate binding site.

Belongs to the class I-like SAM-binding methyltransferase superfamily. HNMT family. Monomer.

It carries out the reaction carnosine + S-adenosyl-L-methionine = anserine + S-adenosyl-L-homocysteine + H(+). Its function is as follows. N-methyltransferase that mediates the formation of anserine (beta-alanyl-N(Pi)-methyl-L-histidine) from carnosine. Anserine, a methylated derivative of carnosine (beta-alanyl-L-histidine), is an abundant constituent of vertebrate skeletal muscles. The sequence is that of Carnosine N-methyltransferase 2 from Gallus gallus (Chicken).